The primary structure comprises 106 residues: ATP-dependent Clp protease adapter protein ClpS (106 aa).

Belongs to the ClpS family. As to quaternary structure, binds to the N-terminal domain of the chaperone ClpA.

Its function is as follows. Involved in the modulation of the specificity of the ClpAP-mediated ATP-dependent protein degradation. In Nocardia farcinica (strain IFM 10152), this protein is ATP-dependent Clp protease adapter protein ClpS.